The primary structure comprises 91 residues: Small ribosomal subunit protein bS16 (91 aa).

The protein belongs to the bacterial ribosomal protein bS16 family.

The protein is Small ribosomal subunit protein bS16 of Lacticaseibacillus casei (strain BL23) (Lactobacillus casei).